The following is a 362-amino-acid chain: Alpha-glucoside transport ATP-binding protein AglK (362 aa).

An ABC transporter domain is found at 4 to 235 (LLLKDIRKSY…PANLFVARFI (232 aa)). 36 to 43 (GPSGCGKS) serves as a coordination point for ATP.

Belongs to the ABC transporter superfamily.

It is found in the cell inner membrane. Part of the binding-protein-dependent transport system for alpha-glucosides such as sucrose, maltose and trehalose. Probably responsible for energy coupling to the transport system. This is Alpha-glucoside transport ATP-binding protein AglK (aglK) from Rhizobium meliloti (strain 1021) (Ensifer meliloti).